Reading from the N-terminus, the 500-residue chain is Glycerol-3-phosphate acyltransferase 7 (500 aa).

Transmembrane regions (helical) follow at residues 38 to 58 (GLIRFATLLFLWPIIALLDVL) and 235 to 255 (ALIILLWIPFGIILAMIRIFV). The HXXXXD motif signature appears at 298–303 (HRTLMD).

This sequence belongs to the GPAT/DAPAT family. As to expression, weakly or not expressed in roots, leaves, seedlings, developing siliques and flower buds.

It is found in the membrane. It catalyses the reaction sn-glycerol 3-phosphate + an acyl-CoA = a 1-acyl-sn-glycero-3-phosphate + CoA. The protein operates within phospholipid metabolism; CDP-diacylglycerol biosynthesis; CDP-diacylglycerol from sn-glycerol 3-phosphate: step 1/3. In terms of biological role, esterifies acyl-group from acyl-ACP to the sn-1 position of glycerol-3-phosphate, an essential step in glycerolipid biosynthesis. This is Glycerol-3-phosphate acyltransferase 7 (GPAT7) from Arabidopsis thaliana (Mouse-ear cress).